We begin with the raw amino-acid sequence, 365 residues long: Probable receptor-like protein kinase At2g47060 (365 aa).

The tract at residues 18–48 (DYGGRHNQAKHFPPGNDARHHQASETAQKGP) is disordered. The region spanning 73-353 (FGSNSLIGEG…IVVKALQPLL (281 aa)) is the Protein kinase domain. Residues 79 to 87 (IGEGSYGRV) and lysine 101 each bind ATP. Phosphotyrosine is present on tyrosine 145. The active-site Proton acceptor is aspartate 203. Phosphoserine occurs at positions 207 and 237. Phosphothreonine is present on residues threonine 238 and threonine 243. Tyrosine 251 is modified (phosphotyrosine).

Belongs to the protein kinase superfamily. Ser/Thr protein kinase family.

The enzyme catalyses L-seryl-[protein] + ATP = O-phospho-L-seryl-[protein] + ADP + H(+). It carries out the reaction L-threonyl-[protein] + ATP = O-phospho-L-threonyl-[protein] + ADP + H(+). In Arabidopsis thaliana (Mouse-ear cress), this protein is Probable receptor-like protein kinase At2g47060.